The sequence spans 215 residues: Small ribosomal subunit protein uS7 (215 aa).

The protein belongs to the universal ribosomal protein uS7 family. As to quaternary structure, part of the 30S ribosomal subunit.

Functionally, one of the primary rRNA binding proteins, it binds directly to 16S rRNA where it nucleates assembly of the head domain of the 30S subunit. Is located at the subunit interface close to the decoding center. In Thermococcus onnurineus (strain NA1), this protein is Small ribosomal subunit protein uS7.